Here is a 350-residue protein sequence, read N- to C-terminus: Variable large protein 4 (350 aa).

The first 18 residues, 1–18, serve as a signal peptide directing secretion; that stretch reads MRRRISAIIMTLFMVLVS. Residue C19 is the site of N-palmitoyl cysteine attachment. C19 carries S-diacylglycerol cysteine lipidation.

It belongs to the variable large protein (Vlp) family. Delta subfamily.

It is found in the cell outer membrane. The Vlp and Vsp proteins are antigenically distinct proteins, only one vlp or vsp gene is transcriptionally active at any one time. Switching between these genes is a mechanism of host immune response evasion. This Borrelia hermsii protein is Variable large protein 4.